A 470-amino-acid polypeptide reads, in one-letter code: Argininosuccinate lyase (470 aa).

This sequence belongs to the lyase 1 family. Argininosuccinate lyase subfamily.

The protein resides in the cytoplasm. The enzyme catalyses 2-(N(omega)-L-arginino)succinate = fumarate + L-arginine. It functions in the pathway amino-acid biosynthesis; L-arginine biosynthesis; L-arginine from L-ornithine and carbamoyl phosphate: step 3/3. In Mycobacterium sp. (strain MCS), this protein is Argininosuccinate lyase.